The sequence spans 614 residues: Zinc finger and SCAN domain-containing protein 2 (614 aa).

Disordered regions lie at residues 1–26 and 43–76; these read MMAADIPRVTTPLSSLVQVPQEEDRQ and EAVLQEDGPESEPFPQSAGKGGPQEEVTRGPQGA. One can recognise an SCAN box domain in the interval 59-132; sequence SAGKGGPQEE…ALVEDLTQTL (74 aa). 14 C2H2-type zinc fingers span residues 222–244, 250–272, 278–300, 306–328, 334–356, 362–384, 390–412, 418–440, 446–468, 474–496, 502–524, 530–552, 558–580, and 586–608; these read YECPQCGKTFSRKSHLITHERTH, YKCDECGKSFSDGSNFSRHQTTH, YKCRDCGKSFSRSANLITHQRIH, FQCAECGKSFSRSPNLIAHQRTH, YSCPECGKSFGNRSSLNTHQGIH, YECKECGESFSYNSNLIRHQRIH, YKCTDCGQRFSQSSALITHRRTH, YQCSECGKSFSRSSNLATHRRTH, YKCGVCGKSFSQSSSLIAHQGMH, YECLTCGESFSWSSNLLKHQRIH, YKCSECGKCFSQRSQLVVHQRTH, YKCLMCGKSFSRGSILVMHQRAH, YRCPECGKGFSWNSVLIIHQRIH, and YKCPECGKGFSNSSNFITHQRTH.

The protein belongs to the krueppel C2H2-type zinc-finger protein family.

It localises to the nucleus. Its function is as follows. May be involved in transcriptional regulation during the post-meiotic stages of spermatogenesis. In Homo sapiens (Human), this protein is Zinc finger and SCAN domain-containing protein 2 (ZSCAN2).